The chain runs to 140 residues: Nucleoside diphosphate kinase (140 aa).

ATP-binding residues include K11, F59, R87, T93, R104, and N114. The active-site Pros-phosphohistidine intermediate is H117.

This sequence belongs to the NDK family. As to quaternary structure, homotetramer. Requires Mg(2+) as cofactor.

The protein resides in the cytoplasm. It catalyses the reaction a 2'-deoxyribonucleoside 5'-diphosphate + ATP = a 2'-deoxyribonucleoside 5'-triphosphate + ADP. The enzyme catalyses a ribonucleoside 5'-diphosphate + ATP = a ribonucleoside 5'-triphosphate + ADP. Its function is as follows. Major role in the synthesis of nucleoside triphosphates other than ATP. The ATP gamma phosphate is transferred to the NDP beta phosphate via a ping-pong mechanism, using a phosphorylated active-site intermediate. The chain is Nucleoside diphosphate kinase from Methylobacterium radiotolerans (strain ATCC 27329 / DSM 1819 / JCM 2831 / NBRC 15690 / NCIMB 10815 / 0-1).